We begin with the raw amino-acid sequence, 205 residues long: Holliday junction branch migration complex subunit RuvA (205 aa).

Positions 1 to 63 are domain I; the sequence is MIGMLRGHVE…QDAITLFGFG (63 aa). A domain II region spans residues 64-142; it reads TLASKRMFLQ…LSQIEGSSAT (79 aa). Residues 143–145 are flexible linker; that stretch reads AST. Residues 146 to 205 are domain III; it reads PEDTGAEQVVEGLMSLGWHQQDAAHAVQTVCADNQIETPLNAKDVPRVLKLALTSLDRGR.

This sequence belongs to the RuvA family. In terms of assembly, homotetramer. Forms an RuvA(8)-RuvB(12)-Holliday junction (HJ) complex. HJ DNA is sandwiched between 2 RuvA tetramers; dsDNA enters through RuvA and exits via RuvB. An RuvB hexamer assembles on each DNA strand where it exits the tetramer. Each RuvB hexamer is contacted by two RuvA subunits (via domain III) on 2 adjacent RuvB subunits; this complex drives branch migration. In the full resolvosome a probable DNA-RuvA(4)-RuvB(12)-RuvC(2) complex forms which resolves the HJ.

It is found in the cytoplasm. Functionally, the RuvA-RuvB-RuvC complex processes Holliday junction (HJ) DNA during genetic recombination and DNA repair, while the RuvA-RuvB complex plays an important role in the rescue of blocked DNA replication forks via replication fork reversal (RFR). RuvA specifically binds to HJ cruciform DNA, conferring on it an open structure. The RuvB hexamer acts as an ATP-dependent pump, pulling dsDNA into and through the RuvAB complex. HJ branch migration allows RuvC to scan DNA until it finds its consensus sequence, where it cleaves and resolves the cruciform DNA. The protein is Holliday junction branch migration complex subunit RuvA of Bifidobacterium adolescentis (strain ATCC 15703 / DSM 20083 / NCTC 11814 / E194a).